Consider the following 848-residue polypeptide: MNESKGAVDSGLMSGKTERTTLKLSDKLKLSSSIQQNTKFALNKSITTVEVRKSKKRRDIDNIEQASVVLQNDNVYQSDGDNNTLTIQEQISRMNALQNANIHEKKEEVSDDQTDKKEEVTNAETVGLLPVEENVNTDLVIEEGHSEKVEEVIEESVIEDQPNLEHLDVIEEKNGPNQSGDQNVDNSIVDLLQSKAVEEKKLKKYEKEHEEKKGNPKKGVSNHMYSKHVKLVIEEELEDNNKQIIQTHKTRKNRSVSSIKNKITRKVLIPKKITVQELASNMSERVKDVQNMLFQMGRRDIKPNDFLDSDQAAIIVEAFNHTFKLVNDGKLEDDLYSDGNDKELLPRAPVVTVMGHVDHGKTSLLDAIRESNVADGEFKGITQHIGAYQIILDGDKRITFIDTPGHEAFTAMRACGTNVTDIVVLVVAADDGIMPQTIESINHVKAANVAMIVAVNKIDKHDANLDKITNSLLNHGVVAESLGGDVIVVPVSAKEKINLDQLKSSILLMAELLELKAIYNTRASGVVIESKIDKNCGVVATLIVQKGTLKSGDIIVVGHNSYGKVRNMFNSDGRSQKVAIPSMPVKVLGLNNVPNSGSSFIVVDSEKQARELINYRQELFNASLEENAKSKMDASNILACDVVDELNVILKCDVMGSVEAICYSISKITHEDIKLNVLYKGVGNVTKSDVLLAETSNSIILAFNVKADAQVKELAKQRCVEINHYSVIYDIIDDVKRILSSMLKPLQQEVQVGALAIRKVFSSGNAGSVLGCYVTSGVVKKGSLVKLIRNNTIIHEGKIKVLRRFKDDVKEVSSGFECGILLDYSKEIYPESDIINVLEVIEEVRVIK.

Residues 1 to 20 (MNESKGAVDSGLMSGKTERT) are disordered. Residues 346–516 (PRAPVVTVMG…LLMAELLELK (171 aa)) enclose the tr-type G domain. Positions 355 to 362 (GHVDHGKT) are G1. GTP is bound at residue 355–362 (GHVDHGKT). Residues 380 to 384 (GITQH) are G2. Residues 402–405 (DTPG) are G3. Residues 402-406 (DTPGH) and 456-459 (NKID) each bind GTP. Positions 456–459 (NKID) are G4. The G5 stretch occupies residues 492–494 (SAK).

The protein belongs to the TRAFAC class translation factor GTPase superfamily. Classic translation factor GTPase family. IF-2 subfamily.

The protein localises to the cytoplasm. Functionally, one of the essential components for the initiation of protein synthesis. Protects formylmethionyl-tRNA from spontaneous hydrolysis and promotes its binding to the 30S ribosomal subunits. Also involved in the hydrolysis of GTP during the formation of the 70S ribosomal complex. This is Translation initiation factor IF-2 from Ehrlichia canis (strain Jake).